The chain runs to 538 residues: Carboxypeptidase 2 (538 aa).

The signal sequence occupies residues 1–21; it reads MVAYRFLTLISLGLGSHCVSA. Asparagine 46 carries N-linked (GlcNAc...) asparagine glycosylation. Residues 53–76 form a disordered region; sequence PAFTSPGTVSRGFSDGTSGPTRDE. Positions 71-351 constitute a Peptidase M14 domain; it reads GPTRDETMEG…VMAKSVLQTA (281 aa). Zn(2+)-binding residues include histidine 136, glutamate 139, and histidine 224. Glutamate 322 functions as the Proton donor/acceptor in the catalytic mechanism. Residues asparagine 393 and asparagine 459 are each glycosylated (N-linked (GlcNAc...) asparagine).

This sequence belongs to the peptidase M14 family. The cofactor is Zn(2+).

The protein localises to the secreted. In terms of biological role, extracellular metalloprotease that contributes to pathogenicity. This chain is Carboxypeptidase 2 (MCPB), found in Trichophyton rubrum (Athlete's foot fungus).